The chain runs to 281 residues: Putative zinc-binding protein ORF11 (281 aa).

This is Putative zinc-binding protein ORF11 (ORF11) from Ictaluridae (bullhead catfishes).